Reading from the N-terminus, the 639-residue chain is Chaperone protein DnaK (639 aa).

The residue at position 196 (Thr196) is a Phosphothreonine; by autocatalysis. The segment at 592–639 is disordered; the sequence is ASSLYQTPDAGAPGASGPSAGGEPETGKKGGDGEVQNAEYEVIDGNDK. A compositionally biased stretch (low complexity) spans 601 to 613; the sequence is AGAPGASGPSAGG.

Belongs to the heat shock protein 70 family.

Functionally, acts as a chaperone. In Chlorobium limicola (strain DSM 245 / NBRC 103803 / 6330), this protein is Chaperone protein DnaK.